The primary structure comprises 286 residues: Hydroxysteroid 11-beta-dehydrogenase 1-like protein (286 aa).

The first 17 residues, 1-17, serve as a signal peptide directing secretion; the sequence is MGIHIKRWCFIILVASA. Residues 39-65, 90-91, and 117-119 each bind NADP(+); these read GASTGIGEEIAYHYARAGAKLVLTARR, DM, and NHI. Serine 168 contacts substrate. Tyrosine 181 acts as the Proton acceptor in catalysis. NADP(+)-binding positions include 181 to 185 and 214 to 220; these read YAASK and GLIDTQS.

It belongs to the short-chain dehydrogenases/reductases (SDR) family.

Its subcellular location is the secreted. The catalysed reaction is cortisone + NADPH + H(+) = cortisol + NADP(+). Functionally, unidirectional NADP(+)-dependent cortisol dehydrogenase (in vitro). The sequence is that of Hydroxysteroid 11-beta-dehydrogenase 1-like protein (hsd11b1l) from Xenopus tropicalis (Western clawed frog).